The following is a 237-amino-acid chain: MRFPVPLVPARLVRRYKRFLADAVLEDGTELTAHVANSGAMLGLMAPGARVWLAPKSGKTAKLPYGWELVEADLGAGPELVGVNTMHPNVLVAEAIAAGKVPELAGYARMRREVKYGVNSRIDILLEDDDRPPCFVEVKNVHLMRAPGHAEFPDCATARGAKHLAELAAEVKAGHRAVMVYLSQIASARDIRLARDLDPAYGRAFDLARTAGVEAIGLVCRIDAQGIEVTGTIPMLG.

Belongs to the SfsA family.

The chain is Sugar fermentation stimulation protein homolog from Azorhizobium caulinodans (strain ATCC 43989 / DSM 5975 / JCM 20966 / LMG 6465 / NBRC 14845 / NCIMB 13405 / ORS 571).